A 209-amino-acid chain; its full sequence is Somatotropin (209 aa).

Residues 1–22 (MGQVFLLMPVLLVAGYLSLGAA) form the signal peptide. Zn(2+) is bound at residue H38. A disulfide bond links C71 and C182. E191 lines the Zn(2+) pocket. An intrachain disulfide couples C199 to C207.

The protein belongs to the somatotropin/prolactin family.

It localises to the secreted. In terms of biological role, growth hormone plays an important role in growth control and is involved in the regulation of several anabolic processes. Implicated as an osmoregulatory substance important for seawater adaptation. This is Somatotropin (gh) from Esox lucius (Northern pike).